A 335-amino-acid polypeptide reads, in one-letter code: Dehydration-responsive element-binding protein 2A (335 aa).

Disordered stretches follow at residues methionine 1–valine 32 and serine 50–asparagine 74. Residues arginine 19 to lysine 55 carry the Nuclear localization signal motif. Residues lysine 52–methionine 66 are compositionally biased toward basic residues. The segment at residues serine 78–proline 135 is a DNA-binding region (AP2/ERF). The interval glutamine 279–leucine 304 is disordered. A compositionally biased stretch (polar residues) spans serine 286–leucine 304.

The protein belongs to the AP2/ERF transcription factor family. ERF subfamily. As to quaternary structure, interacts with MED25. Binds to DPB3-1 in the nucleus during heat-stress. Post-translationally, ubiquitinated by DRIP1 and DRIP2. Ubiquitination probably leads to its subsequent degradation, thus negatively regulating response to drought. As to expression, expressed preferentially in roots and stems, and at a lower level in leaves.

The protein localises to the nucleus. In terms of biological role, transcriptional activator that binds specifically to the DNA sequence 5'-[AG]CCGAC-3'. Binding to the C-repeat/DRE element mediates high salinity- and dehydration-inducible transcription. Promotes the expression of heat stress-inducible genes by contributing to the formation of a heat stress-specific transcriptional complex with NF-Y subunits (e.g. DPB3-1, NF-YA2 and NF-YB3) at the promoter of target genes, thus promoting heat tolerance. This Arabidopsis thaliana (Mouse-ear cress) protein is Dehydration-responsive element-binding protein 2A.